We begin with the raw amino-acid sequence, 245 residues long: 1-(5-phosphoribosyl)-5-[(5-phosphoribosylamino)methylideneamino] imidazole-4-carboxamide isomerase (245 aa).

Asp-7 (proton acceptor) is an active-site residue. Asp-129 acts as the Proton donor in catalysis.

Belongs to the HisA/HisF family.

The protein localises to the cytoplasm. It catalyses the reaction 1-(5-phospho-beta-D-ribosyl)-5-[(5-phospho-beta-D-ribosylamino)methylideneamino]imidazole-4-carboxamide = 5-[(5-phospho-1-deoxy-D-ribulos-1-ylimino)methylamino]-1-(5-phospho-beta-D-ribosyl)imidazole-4-carboxamide. It participates in amino-acid biosynthesis; L-histidine biosynthesis; L-histidine from 5-phospho-alpha-D-ribose 1-diphosphate: step 4/9. This chain is 1-(5-phosphoribosyl)-5-[(5-phosphoribosylamino)methylideneamino] imidazole-4-carboxamide isomerase, found in Klebsiella pneumoniae subsp. pneumoniae (strain ATCC 700721 / MGH 78578).